The chain runs to 339 residues: MTTRIAIDCMGGDHGPSVTVPAAIQFLAEHPSANLVLVGQEGVLRPLLGNHANDSRIRLLHASEIVGMDESPALALRNKKDSSMRVAINQVKAGDADACVSAGNTGALMAISRFVLKMLPGIDRPAICAPLPTVNGHTHMLDLGANVDCGPHHLLQFGIMGAMLVAAMEHKDQPTVGILNIGEEEIKGNEVVKAAAELLRASDLNFIGNVEGDGIYKGEADVIVCDGFVGNVALKTSEGLAQMLASSLRSEFKRNWLTKLAALIAISVLNNFKKRFDHRRYNGAILLGLKGISVKSHGSADILAFGNAISRAYDAAENRVVERISSRIAAMIPAAVENV.

This sequence belongs to the PlsX family. In terms of assembly, homodimer. Probably interacts with PlsY.

It is found in the cytoplasm. The catalysed reaction is a fatty acyl-[ACP] + phosphate = an acyl phosphate + holo-[ACP]. Its pathway is lipid metabolism; phospholipid metabolism. Catalyzes the reversible formation of acyl-phosphate (acyl-PO(4)) from acyl-[acyl-carrier-protein] (acyl-ACP). This enzyme utilizes acyl-ACP as fatty acyl donor, but not acyl-CoA. This is Phosphate acyltransferase from Dechloromonas aromatica (strain RCB).